A 279-amino-acid polypeptide reads, in one-letter code: Thymidylate synthase (279 aa).

Residue 133-134 (RR) participates in dUMP binding. Cys154 functions as the Nucleophile in the catalytic mechanism. DUMP-binding positions include 178–181 (RSND), Asn189, and 219–221 (HIY). Asp181 provides a ligand contact to (6R)-5,10-methylene-5,6,7,8-tetrahydrofolate. Ala278 provides a ligand contact to (6R)-5,10-methylene-5,6,7,8-tetrahydrofolate.

Belongs to the thymidylate synthase family. Bacterial-type ThyA subfamily. As to quaternary structure, homodimer.

It localises to the cytoplasm. It carries out the reaction dUMP + (6R)-5,10-methylene-5,6,7,8-tetrahydrofolate = 7,8-dihydrofolate + dTMP. It functions in the pathway pyrimidine metabolism; dTTP biosynthesis. Functionally, catalyzes the reductive methylation of 2'-deoxyuridine-5'-monophosphate (dUMP) to 2'-deoxythymidine-5'-monophosphate (dTMP) while utilizing 5,10-methylenetetrahydrofolate (mTHF) as the methyl donor and reductant in the reaction, yielding dihydrofolate (DHF) as a by-product. This enzymatic reaction provides an intracellular de novo source of dTMP, an essential precursor for DNA biosynthesis. In Streptococcus pyogenes serotype M6 (strain ATCC BAA-946 / MGAS10394), this protein is Thymidylate synthase.